A 669-amino-acid polypeptide reads, in one-letter code: Cell surface receptor daf-1 (669 aa).

An N-terminal signal peptide occupies residues 1–19; sequence MRIRHVVFCLLALVYGAET. At 20-170 the chain is on the extracellular side; it reads SDDDLDERTN…APGPQQSSTW (151 aa). Residues asparagine 49, asparagine 79, asparagine 133, and asparagine 154 are each glycosylated (N-linked (GlcNAc...) asparagine). The chain crosses the membrane as a helical span at residues 171–191; that stretch reads LILTILALLTFIVLLGIAIFL. Residues 192–669 lie on the Cytoplasmic side of the membrane; the sequence is TRKSWEAKFD…NDDSSRPLLG (478 aa). The GS domain occupies 262-292; sequence NNMKDMLDVLEETSGSGMGPTTLHKLTIGGQ. Positions 293–593 constitute a Protein kinase domain; it reads IRLTGRVGSG…KRMDERQQLL (301 aa). ATP-binding positions include 299–307 and lysine 320; that span reads VGSGRFGNV. Aspartate 423 (proton acceptor) is an active-site residue. 2 stretches are compositionally biased toward basic and acidic residues: residues 611 to 624 and 633 to 650; these read DRKILGPQKPKDES and VQKEIDREDEQENWRETA. Residues 611–669 form a disordered region; the sequence is DRKILGPQKPKDESPANGAPRIVQKEIDREDEQENWRETAKTPNGHISSNDDSSRPLLG. A compositionally biased stretch (polar residues) spans 651–661; sequence KTPNGHISSND.

It belongs to the protein kinase superfamily. TKL Ser/Thr protein kinase family. TGFB receptor subfamily. In terms of assembly, may interact with daf-4 to regulate dauer larva development. In terms of tissue distribution, head and ventral nerve cord from embryos to adults. Expressed in many sensory neurons. Subset of head neurons show coexpression with daf-4 when dauer/nondauer decision is made. Also expressed in non-neuronal cells: membraneous sheath surrounding the distal end of the intestine and in the distal tip cell of the gonad.

The protein localises to the membrane. It carries out the reaction L-threonyl-[receptor-protein] + ATP = O-phospho-L-threonyl-[receptor-protein] + ADP + H(+). It catalyses the reaction L-seryl-[receptor-protein] + ATP = O-phospho-L-seryl-[receptor-protein] + ADP + H(+). Functionally, probably involved in a TGF-beta pathway. May be a receptor for TGF-beta-like ligand daf-7. Controls the decision of whether or not larvae enter a developmentally arrested state, known as dauer, in response to environmental conditions. Involved in regulating entry into quiescence triggered by satiety. Involved in sensitivity to CO2 levels. In AWC neurons, acts to promote expression of srsx-3, a member of the GPCR family. The chain is Cell surface receptor daf-1 (daf-1) from Caenorhabditis elegans.